The sequence spans 569 residues: 5'-AMP-activated protein kinase subunit gamma-2 (569 aa).

Residues 1–222 form a disordered region; that stretch reads MGSAVMDTKK…TRPPLASPTH (222 aa). Phosphoserine occurs at positions 65, 71, 73, 90, 138, 143, 161, and 162. Positions 156-167 are enriched in low complexity; sequence TSGLSSSPSTPT. At Thr-165 the chain carries Phosphothreonine. The span at 179–189 shows a compositional bias: basic and acidic residues; it reads SYKHEPERLEN. Polar residues predominate over residues 192–212; the sequence is YASSSPPDTGQRFCPSSFQSP. At Ser-196 the chain carries Phosphoserine. 3 CBS domains span residues 275 to 335, 357 to 415, and 430 to 492; these read PTSS…KSPM, TFKP…MSDM, and IGTY…NLDI. Residues Arg-302, 317-322, Val-362, 383-384, and Lys-402 each bind ADP; these read MLTITD and HR. Residues Arg-302, 317–322, Val-362, His-383, 383–384, Lys-402, Thr-432, Ala-437, 458–459, 474–477, Arg-501, His-530, 530–531, and 546–549 each bind AMP; these read MLTITD, HR, SA, SKFD, and SLSD. ATP contacts are provided by residues Arg-302, 317–322, Val-362, 383–384, Arg-384, and Lys-402; these read MLTITD and HR. The short motif at 370 to 391 is the AMPK pseudosubstrate element; that stretch reads LFDAVYSLIKNKIHRLPVIDPI. ADP contacts are provided by residues 474 to 477, Arg-501, and 530 to 531; these read SKFD and HR. Residues 474–477, Arg-501, and 530–531 each bind ATP; these read SKFD and HR. A CBS 4 domain is found at 504–562; it reads YFEGVVKCNKLEILETIVDRIVRAEVHRLVVVNEADSIVGIISLSDILQALILTPAGAK.

This sequence belongs to the 5'-AMP-activated protein kinase gamma subunit family. In terms of assembly, AMPK is a heterotrimer of an alpha catalytic subunit (PRKAA1 or PRKAA2), a beta (PRKAB1 or PRKAB2) and a gamma non-catalytic subunits (PRKAG1, PRKAG2 or PRKAG3). Interacts with FNIP1 and FNIP2. In terms of processing, phosphorylated by ULK1; leading to negatively regulate AMPK activity and suggesting the existence of a regulatory feedback loop between ULK1 and AMPK. Glycosylated; O-GlcNAcylated by OGT, promoting the AMP-activated protein kinase (AMPK) activity. As to expression, isoform B is ubiquitously expressed except in liver and thymus. The highest level is detected in heart with abundant expression in placenta and testis.

Functionally, AMP/ATP-binding subunit of AMP-activated protein kinase (AMPK), an energy sensor protein kinase that plays a key role in regulating cellular energy metabolism. In response to reduction of intracellular ATP levels, AMPK activates energy-producing pathways and inhibits energy-consuming processes: inhibits protein, carbohydrate and lipid biosynthesis, as well as cell growth and proliferation. AMPK acts via direct phosphorylation of metabolic enzymes, and by longer-term effects via phosphorylation of transcription regulators. Also acts as a regulator of cellular polarity by remodeling the actin cytoskeleton; probably by indirectly activating myosin. Gamma non-catalytic subunit mediates binding to AMP, ADP and ATP, leading to activate or inhibit AMPK: AMP-binding results in allosteric activation of alpha catalytic subunit (PRKAA1 or PRKAA2) both by inducing phosphorylation and preventing dephosphorylation of catalytic subunits. ADP also stimulates phosphorylation, without stimulating already phosphorylated catalytic subunit. ATP promotes dephosphorylation of catalytic subunit, rendering the AMPK enzyme inactive. The sequence is that of 5'-AMP-activated protein kinase subunit gamma-2 (PRKAG2) from Homo sapiens (Human).